A 321-amino-acid chain; its full sequence is Putative sulfotransferase vep-2 (321 aa).

Residues 11 to 31 (IARVLIIIASISVICITLFIS) form a helical membrane-spanning segment.

It to C.elegans C41C4.1 and C18B2.2.

The protein localises to the membrane. The polypeptide is Putative sulfotransferase vep-2 (Caenorhabditis elegans).